The chain runs to 366 residues: Histidinol-phosphate aminotransferase 2 (366 aa).

Positions 1–11 are enriched in polar residues; sequence MQVKDQLSSLQ. The disordered stretch occupies residues 1–21; it reads MQVKDQLSSLQPYKPGKSPEQ. Position 222 is an N6-(pyridoxal phosphate)lysine (lysine 222).

The protein belongs to the class-II pyridoxal-phosphate-dependent aminotransferase family. Histidinol-phosphate aminotransferase subfamily. In terms of assembly, homodimer. The cofactor is pyridoxal 5'-phosphate.

It carries out the reaction L-histidinol phosphate + 2-oxoglutarate = 3-(imidazol-4-yl)-2-oxopropyl phosphate + L-glutamate. Its pathway is amino-acid biosynthesis; L-histidine biosynthesis; L-histidine from 5-phospho-alpha-D-ribose 1-diphosphate: step 7/9. The chain is Histidinol-phosphate aminotransferase 2 from Bacillus cereus (strain ATCC 10987 / NRS 248).